We begin with the raw amino-acid sequence, 882 residues long: DNA mismatch repair protein MutS (882 aa).

Residue 626-633 (GPNMAGKS) participates in ATP binding.

It belongs to the DNA mismatch repair MutS family.

Its function is as follows. This protein is involved in the repair of mismatches in DNA. It is possible that it carries out the mismatch recognition step. This protein has a weak ATPase activity. The chain is DNA mismatch repair protein MutS from Anaeromyxobacter sp. (strain Fw109-5).